A 154-amino-acid polypeptide reads, in one-letter code: Fimbrial protein (154 aa).

A propeptide spans M1–G6 (leader sequence). At F7 the chain carries N-methylphenylalanine. The helical transmembrane segment at F7–I27 threads the bilayer. A disulfide bond links C133 and C151. A glycan (O-linked (FucNAc...) serine) is linked at S154.

It belongs to the N-Me-Phe pilin family. As to quaternary structure, the pili are polar flexible filaments of about 5.4 nanometers diameter and 2.5 micrometers average length; they consist of only a single polypeptide chain arranged in a helical configuration of five subunits per turn in the assembled pilus. O-glycosylated; glycan consists of 5NbetaOHC47NFmPse(alpha2-4)Xyl(beta1-3)FucNAc in beta1-O linkage to Ser.

It localises to the fimbrium. It is found in the membrane. This is Fimbrial protein (pilA) from Pseudomonas aeruginosa.